The following is a 171-amino-acid chain: Large ribosomal subunit protein bL21 (171 aa).

The tract at residues 144-171 is disordered; it reads AAPAKAEAAPKKKAAPKKAAAKTEEGEA. The span at 154 to 163 shows a compositional bias: basic residues; that stretch reads KKKAAPKKAA.

Belongs to the bacterial ribosomal protein bL21 family. Part of the 50S ribosomal subunit. Contacts protein L20.

Functionally, this protein binds to 23S rRNA in the presence of protein L20. This is Large ribosomal subunit protein bL21 from Caulobacter vibrioides (strain ATCC 19089 / CIP 103742 / CB 15) (Caulobacter crescentus).